Consider the following 702-residue polypeptide: Ribosomal RNA large subunit methyltransferase K/L (702 aa).

In terms of domain architecture, THUMP spans 43–154; that stretch reads LVYQSLMWSR…KETASIALDL (112 aa).

The protein belongs to the methyltransferase superfamily. RlmKL family.

It localises to the cytoplasm. The catalysed reaction is guanosine(2445) in 23S rRNA + S-adenosyl-L-methionine = N(2)-methylguanosine(2445) in 23S rRNA + S-adenosyl-L-homocysteine + H(+). It catalyses the reaction guanosine(2069) in 23S rRNA + S-adenosyl-L-methionine = N(2)-methylguanosine(2069) in 23S rRNA + S-adenosyl-L-homocysteine + H(+). Its function is as follows. Specifically methylates the guanine in position 2445 (m2G2445) and the guanine in position 2069 (m7G2069) of 23S rRNA. In Escherichia coli O6:K15:H31 (strain 536 / UPEC), this protein is Ribosomal RNA large subunit methyltransferase K/L.